An 85-amino-acid chain; its full sequence is Large ribosomal subunit protein bL31 (85 aa).

Residues 65-85 form a disordered region; that stretch reads YGMGGAGKAGEDKKAGDKADA. The segment covering 73 to 85 has biased composition (basic and acidic residues); the sequence is AGEDKKAGDKADA.

Belongs to the bacterial ribosomal protein bL31 family. Type A subfamily. Part of the 50S ribosomal subunit.

Its function is as follows. Binds the 23S rRNA. The chain is Large ribosomal subunit protein bL31 from Synechococcus sp. (strain WH7803).